Reading from the N-terminus, the 375-residue chain is Anhydro-N-acetylmuramic acid kinase (375 aa).

12 to 19 (GTSLDGVD) contacts ATP.

This sequence belongs to the anhydro-N-acetylmuramic acid kinase family.

The enzyme catalyses 1,6-anhydro-N-acetyl-beta-muramate + ATP + H2O = N-acetyl-D-muramate 6-phosphate + ADP + H(+). It functions in the pathway amino-sugar metabolism; 1,6-anhydro-N-acetylmuramate degradation. Its pathway is cell wall biogenesis; peptidoglycan recycling. Catalyzes the specific phosphorylation of 1,6-anhydro-N-acetylmuramic acid (anhMurNAc) with the simultaneous cleavage of the 1,6-anhydro ring, generating MurNAc-6-P. Is required for the utilization of anhMurNAc either imported from the medium or derived from its own cell wall murein, and thus plays a role in cell wall recycling. This is Anhydro-N-acetylmuramic acid kinase from Mannheimia succiniciproducens (strain KCTC 0769BP / MBEL55E).